The sequence spans 364 residues: Dihydroorotate dehydrogenase (quinone) (364 aa).

FMN contacts are provided by residues 61–65 and Ser85; that span reads AGFDK. Residue Lys65 participates in substrate binding. Residue 110–114 coordinates substrate; sequence NRMGF. FMN is bound by residues Asn139 and Asn170. Asn170 provides a ligand contact to substrate. The active-site Nucleophile is Ser173. Asn175 serves as a coordination point for substrate. Positions 214 and 242 each coordinate FMN. 243–244 contributes to the substrate binding site; the sequence is NT. Residues Gly266, Gly295, and 316-317 contribute to the FMN site; that span reads YS.

The protein belongs to the dihydroorotate dehydrogenase family. Type 2 subfamily. As to quaternary structure, monomer. FMN serves as cofactor.

The protein resides in the cell membrane. It catalyses the reaction (S)-dihydroorotate + a quinone = orotate + a quinol. Its pathway is pyrimidine metabolism; UMP biosynthesis via de novo pathway; orotate from (S)-dihydroorotate (quinone route): step 1/1. In terms of biological role, catalyzes the conversion of dihydroorotate to orotate with quinone as electron acceptor. This is Dihydroorotate dehydrogenase (quinone) from Bradyrhizobium sp. (strain ORS 278).